A 259-amino-acid polypeptide reads, in one-letter code: Leucine-rich repeat-containing protein 61 (259 aa).

LRR repeat units lie at residues 54–75 (NLEW…ASLR), 76–97 (QLAV…AACE), and 98–119 (NLQS…QCLA). The 41-residue stretch at 138–178 (NPLCANASYWAVVRELLPGLKVIDGERVSGRGSELYQLCRD) folds into the LRRCT domain.

In Mus musculus (Mouse), this protein is Leucine-rich repeat-containing protein 61 (Lrrc61).